The primary structure comprises 185 residues: MIDDTLLESEERMTQSVEYAREDLTTIRTGRANPSMFNGVQAEYYGVMTPITQMATISVPEPRMLLIKPYEPSIMNAIENAIRNSDLGVNPTNDGQVLRVTVPQLTEERRKEMVRLAKSKGEDARIAIRNIRRKGMDELKRIQKDGEAGEDEVQAAEKELDKTTHEYVSQVDKLIEAKEKELMEV.

This sequence belongs to the RRF family.

It is found in the cytoplasm. Responsible for the release of ribosomes from messenger RNA at the termination of protein biosynthesis. May increase the efficiency of translation by recycling ribosomes from one round of translation to another. This Corynebacterium kroppenstedtii (strain DSM 44385 / JCM 11950 / CIP 105744 / CCUG 35717) protein is Ribosome-recycling factor.